We begin with the raw amino-acid sequence, 402 residues long: B3 domain-containing protein Os01g0723500 (402 aa).

Positions 18-121 form a DNA-binding region, TF-B3 1; the sequence is RPHFFKVLVG…RFTAMVFDRT (104 aa). The segment at 126 to 203 is disordered; it reads EDLMGGGGGD…VKNEEDADEL (78 aa). Positions 152-162 are enriched in basic and acidic residues; sequence DAARPKKDSVG. The span at 173-186 shows a compositional bias: polar residues; that stretch reads SGGQPLQIVDSSWT. The TF-B3 2 DNA-binding region spans 289-381; that stretch reads CVIRMSTMHV…EFRVHIFRVV (93 aa).

It localises to the nucleus. The sequence is that of B3 domain-containing protein Os01g0723500 from Oryza sativa subsp. japonica (Rice).